The sequence spans 1623 residues: ATP-binding cassette sub-family A member 9 (1623 aa).

A helical membrane pass occupies residues leucine 31 to leucine 51. A glycan (N-linked (GlcNAc...) asparagine) is linked at asparagine 120. 6 helical membrane passes run phenylalanine 225–isoleucine 245, alanine 265–methionine 285, valine 295–isoleucine 315, phenylalanine 329–alanine 349, leucine 354–methionine 374, and leucine 398–leucine 418. One can recognise an ABC transporter 1 domain in the interval isoleucine 481–histidine 716. An ATP-binding site is contributed by glycine 517 to threonine 524. A run of 7 helical transmembrane segments spans residues leucine 863–valine 883, alanine 1025–serine 1045, leucine 1071–phenylalanine 1091, isoleucine 1107–isoleucine 1127, serine 1135–isoleucine 1155, leucine 1163–serine 1183, and glutamine 1199–leucine 1219. In terms of domain architecture, ABC transporter 2 spans leucine 1287–lysine 1520. Residue glycine 1325–serine 1332 coordinates ATP.

This sequence belongs to the ABC transporter superfamily. ABCA family. In terms of tissue distribution, highly expressed in heart and to lower extent in kidney, brain and spleen. Weakly expressed in developing and adult brains. Weakly expressed in the cerebellar granular layer at P14 and P21.

Its subcellular location is the membrane. Functionally, transporter that may play a role in monocyte differentiation and lipid transport and homeostasis. In Mus musculus (Mouse), this protein is ATP-binding cassette sub-family A member 9 (Abca9).